Consider the following 677-residue polypeptide: UvrABC system protein B (677 aa).

The region spanning 24-412 (EGVLQGVPAQ…EGIVVEQVIR (389 aa)) is the Helicase ATP-binding domain. Residue 37-44 (GVTGSGKT) participates in ATP binding. The short motif at 90-113 (YYDYYQPEAYLPNSDTYIEKDLAI) is the Beta-hairpin element. A Helicase C-terminal domain is found at 429 to 591 (QIDDLMEEIQ…ITPQQIKKAR (163 aa)). The UVR domain maps to 636–671 (EKSIERTRKLMQEAAKKLEFIEAAQYRNELLKLEDL).

Belongs to the UvrB family. As to quaternary structure, forms a heterotetramer with UvrA during the search for lesions. Interacts with UvrC in an incision complex.

It is found in the cytoplasm. In terms of biological role, the UvrABC repair system catalyzes the recognition and processing of DNA lesions. A damage recognition complex composed of 2 UvrA and 2 UvrB subunits scans DNA for abnormalities. Upon binding of the UvrA(2)B(2) complex to a putative damaged site, the DNA wraps around one UvrB monomer. DNA wrap is dependent on ATP binding by UvrB and probably causes local melting of the DNA helix, facilitating insertion of UvrB beta-hairpin between the DNA strands. Then UvrB probes one DNA strand for the presence of a lesion. If a lesion is found the UvrA subunits dissociate and the UvrB-DNA preincision complex is formed. This complex is subsequently bound by UvrC and the second UvrB is released. If no lesion is found, the DNA wraps around the other UvrB subunit that will check the other stand for damage. This Bacteroides thetaiotaomicron (strain ATCC 29148 / DSM 2079 / JCM 5827 / CCUG 10774 / NCTC 10582 / VPI-5482 / E50) protein is UvrABC system protein B.